The sequence spans 170 residues: Large ribosomal subunit protein uL11 (170 aa).

The protein belongs to the universal ribosomal protein uL11 family. As to quaternary structure, part of the ribosomal stalk of the 50S ribosomal subunit. Interacts with L10 and the large rRNA to form the base of the stalk. L10 forms an elongated spine to which L12 dimers bind in a sequential fashion forming a multimeric L10(L12)X complex.

Its function is as follows. Forms part of the ribosomal stalk which helps the ribosome interact with GTP-bound translation factors. This chain is Large ribosomal subunit protein uL11, found in Saccharolobus islandicus (strain Y.N.15.51 / Yellowstone #2) (Sulfolobus islandicus).